Here is a 213-residue protein sequence, read N- to C-terminus: Large ribosomal subunit protein uL3 (213 aa).

Positions 130–161 are disordered; that stretch reads KRGNMTHGSKNHRLPGSTGAGTTPGRVYPGKR.

The protein belongs to the universal ribosomal protein uL3 family. As to quaternary structure, part of the 50S ribosomal subunit. Forms a cluster with proteins L14 and L19.

Functionally, one of the primary rRNA binding proteins, it binds directly near the 3'-end of the 23S rRNA, where it nucleates assembly of the 50S subunit. The chain is Large ribosomal subunit protein uL3 from Picosynechococcus sp. (strain ATCC 27264 / PCC 7002 / PR-6) (Agmenellum quadruplicatum).